A 229-amino-acid polypeptide reads, in one-letter code: Triosephosphate isomerase (229 aa).

Residue 9–11 (NYK) participates in substrate binding. The active-site Electrophile is the histidine 93. The active-site Proton acceptor is the glutamate 141. Substrate contacts are provided by residues isoleucine 146, glycine 180, and 201–202 (AS).

It belongs to the triosephosphate isomerase family. As to quaternary structure, homotetramer; dimer of dimers.

Its subcellular location is the cytoplasm. The enzyme catalyses D-glyceraldehyde 3-phosphate = dihydroxyacetone phosphate. It participates in carbohydrate biosynthesis; gluconeogenesis. The protein operates within carbohydrate degradation; glycolysis; D-glyceraldehyde 3-phosphate from glycerone phosphate: step 1/1. Functionally, involved in the gluconeogenesis. Catalyzes stereospecifically the conversion of dihydroxyacetone phosphate (DHAP) to D-glyceraldehyde-3-phosphate (G3P). The polypeptide is Triosephosphate isomerase (Sulfurisphaera tokodaii (strain DSM 16993 / JCM 10545 / NBRC 100140 / 7) (Sulfolobus tokodaii)).